The chain runs to 57 residues: Large ribosomal subunit protein bL32 (57 aa).

Basic residues predominate over residues Met-1–Trp-20. Residues Met-1–Lys-21 form a disordered region.

It belongs to the bacterial ribosomal protein bL32 family.

This is Large ribosomal subunit protein bL32 from Rippkaea orientalis (strain PCC 8801 / RF-1) (Cyanothece sp. (strain PCC 8801)).